Reading from the N-terminus, the 369-residue chain is MAIKVLVVDDSSFFRRRVSEIINSESRLEVIDVAVNGREAVEKAKALKPDVITMDIEMPVMDGITAVREIMAASPTPILMFSSLTHDGAKATLDALDAGALDFLPKKFEDIARNRDEAVSLLQQRVIQIASKRAFMRRPVARPAAATSSARPLASRTAAPAASAPARPATTKFRASGKKYQLTAIGTSTGGPVALQKILTRLPMNYPHPIVLIQHMPATFTAAFASRLNTLCKIQVKEAQDGDVLQAGVAYLAPGGKQMMIDGRAGAARLRIIDGGDRMNYKPCVDVTFGSAAKVYGDKVLSMVLTGMGADGREGARMLKSAGSTIWAQDEESCVVYGMPQAVAKAGISSEDLPLDRIAERMLVEVGLA.

Residues K4–L121 form the Response regulatory domain. D55 is subject to 4-aspartylphosphate. Residues A146–T171 show a composition bias toward low complexity. Residues A146–A175 are disordered. Residues S176–A369 form the CheB-type methylesterase domain. Residues S188, H215, and D311 contribute to the active site.

Belongs to the CheB family. In terms of processing, phosphorylated by CheA. Phosphorylation of the N-terminal regulatory domain activates the methylesterase activity.

It is found in the cytoplasm. The enzyme catalyses [protein]-L-glutamate 5-O-methyl ester + H2O = L-glutamyl-[protein] + methanol + H(+). The catalysed reaction is L-glutaminyl-[protein] + H2O = L-glutamyl-[protein] + NH4(+). Functionally, involved in chemotaxis. Part of a chemotaxis signal transduction system that modulates chemotaxis in response to various stimuli. Catalyzes the demethylation of specific methylglutamate residues introduced into the chemoreceptors (methyl-accepting chemotaxis proteins or MCP) by CheR. Also mediates the irreversible deamidation of specific glutamine residues to glutamic acid. The chain is Protein-glutamate methylesterase/protein-glutamine glutaminase from Vibrio parahaemolyticus serotype O3:K6 (strain RIMD 2210633).